Consider the following 406-residue polypeptide: Argininosuccinate synthase (406 aa).

8–16 (AYSGGLDTT) is a binding site for ATP. L-citrulline-binding residues include Tyr-86 and Ser-91. Gly-116 contacts ATP. Residues Thr-118, Asn-122, and Asp-123 each coordinate L-aspartate. Asn-122 lines the L-citrulline pocket. Positions 126, 175, 184, 261, and 273 each coordinate L-citrulline.

This sequence belongs to the argininosuccinate synthase family. Type 1 subfamily. As to quaternary structure, homotetramer.

It is found in the cytoplasm. It carries out the reaction L-citrulline + L-aspartate + ATP = 2-(N(omega)-L-arginino)succinate + AMP + diphosphate + H(+). The protein operates within amino-acid biosynthesis; L-arginine biosynthesis; L-arginine from L-ornithine and carbamoyl phosphate: step 2/3. This is Argininosuccinate synthase from Brachyspira hyodysenteriae (strain ATCC 49526 / WA1).